Here is a 67-residue protein sequence, read N- to C-terminus: Spiniferin (67 aa).

Positions M1–A23 are cleaved as a signal peptide. L36 bears the Leucine amide mark. A propeptide spanning residues G40–M67 is cleaved from the precursor.

The protein belongs to the non-disulfide-bridged peptide (NDBP) superfamily. Short antimicrobial peptide (group 4) family. As to expression, expressed by the venom gland.

It localises to the secreted. Its subcellular location is the target cell membrane. In terms of biological role, alpha-helical and amphipathic peptide with weak antimicrobial activities against both Gram-positive (MIC=41 uM to &gt;82 uM) and Gram-negative (MIC&gt;82 uM) bacteria. It has extremely weak hemolytic activity against human erythrocytes. This Heterometrus spinifer (Asia giant forest scorpion) protein is Spiniferin.